A 286-amino-acid polypeptide reads, in one-letter code: Pantothenate synthetase (286 aa).

An ATP-binding site is contributed by 31 to 38; that stretch reads MGALHEGH. His38 functions as the Proton donor in the catalytic mechanism. Residue Gln65 participates in (R)-pantoate binding. Gln65 serves as a coordination point for beta-alanine. 153 to 156 serves as a coordination point for ATP; it reads GEKD. (R)-pantoate is bound at residue Gln159. ATP is bound at residue 190–193; sequence LSSR.

Belongs to the pantothenate synthetase family. As to quaternary structure, homodimer.

The protein localises to the cytoplasm. The enzyme catalyses (R)-pantoate + beta-alanine + ATP = (R)-pantothenate + AMP + diphosphate + H(+). It participates in cofactor biosynthesis; (R)-pantothenate biosynthesis; (R)-pantothenate from (R)-pantoate and beta-alanine: step 1/1. Catalyzes the condensation of pantoate with beta-alanine in an ATP-dependent reaction via a pantoyl-adenylate intermediate. The polypeptide is Pantothenate synthetase (Corynebacterium diphtheriae (strain ATCC 700971 / NCTC 13129 / Biotype gravis)).